The chain runs to 480 residues: Aspartyl/glutamyl-tRNA(Asn/Gln) amidotransferase subunit B (480 aa).

Belongs to the GatB/GatE family. GatB subfamily. In terms of assembly, heterotrimer of A, B and C subunits.

The catalysed reaction is L-glutamyl-tRNA(Gln) + L-glutamine + ATP + H2O = L-glutaminyl-tRNA(Gln) + L-glutamate + ADP + phosphate + H(+). It carries out the reaction L-aspartyl-tRNA(Asn) + L-glutamine + ATP + H2O = L-asparaginyl-tRNA(Asn) + L-glutamate + ADP + phosphate + 2 H(+). In terms of biological role, allows the formation of correctly charged Asn-tRNA(Asn) or Gln-tRNA(Gln) through the transamidation of misacylated Asp-tRNA(Asn) or Glu-tRNA(Gln) in organisms which lack either or both of asparaginyl-tRNA or glutaminyl-tRNA synthetases. The reaction takes place in the presence of glutamine and ATP through an activated phospho-Asp-tRNA(Asn) or phospho-Glu-tRNA(Gln). The protein is Aspartyl/glutamyl-tRNA(Asn/Gln) amidotransferase subunit B of Streptococcus pneumoniae (strain ATCC 700669 / Spain 23F-1).